The sequence spans 556 residues: Glutamine--tRNA ligase (556 aa).

The 'HIGH' region motif lies at 34 to 44 (PEPNGYLHIGH). ATP contacts are provided by residues 35-37 (EPN) and 41-47 (HIGHAKS). 2 residues coordinate L-glutamine: Asp67 and Tyr212. ATP is bound by residues Thr231, 263-264 (RL), and 271-273 (MSK). The 'KMSKS' region motif lies at 270 to 274 (VMSKR).

This sequence belongs to the class-I aminoacyl-tRNA synthetase family. Monomer.

The protein resides in the cytoplasm. It carries out the reaction tRNA(Gln) + L-glutamine + ATP = L-glutaminyl-tRNA(Gln) + AMP + diphosphate. This Nitrosomonas europaea (strain ATCC 19718 / CIP 103999 / KCTC 2705 / NBRC 14298) protein is Glutamine--tRNA ligase.